A 337-amino-acid chain; its full sequence is Glyceraldehyde-3-phosphate dehydrogenase 2 (337 aa).

NADP(+) is bound by residues R11 to I12, D35, R80, and T122. D-glyceraldehyde 3-phosphate contacts are provided by residues S153–T155, T184, R199, T212–G213, and R235. The Nucleophile role is filled by C154. N317 contributes to the NADP(+) binding site.

In terms of assembly, homotetramer.

The protein localises to the cytoplasm. It catalyses the reaction D-glyceraldehyde 3-phosphate + phosphate + NADP(+) = (2R)-3-phospho-glyceroyl phosphate + NADPH + H(+). It carries out the reaction D-glyceraldehyde 3-phosphate + phosphate + NAD(+) = (2R)-3-phospho-glyceroyl phosphate + NADH + H(+). It participates in carbohydrate biosynthesis; Calvin cycle. Gap2 has a major role in carbon fixation as a component of the Calvin cycle. Catalyzes the oxidative phosphorylation of glyceraldehyde 3-phosphate (G3P) to 1,3-bisphosphoglycerate (BPG) using the cofactor NADP. The first reaction step involves the formation of a hemiacetal intermediate between G3P and a cysteine residue, and this hemiacetal intermediate is then oxidized to a thioester, with concomitant reduction of NADP to NADPH. The reduced NADPH is then exchanged with the second NAD, and the thioester is attacked by a nucleophilic inorganic phosphate to produce BPG. The sequence is that of Glyceraldehyde-3-phosphate dehydrogenase 2 (gap2) from Nostoc sp. (strain PCC 7120 / SAG 25.82 / UTEX 2576).